The sequence spans 312 residues: D-alanine--D-alanine ligase (312 aa).

Positions 108–308 constitute an ATP-grasp domain; the sequence is KLVWQQTGIP…YSELVVKVLS (201 aa). 138 to 193 provides a ligand contact to ATP; that stretch reads VAKLGMPLFVKPASEGSSVAVEKVKSADALPAALEEAAKHDKIVIVEKSIEGGGEY. Mg(2+)-binding residues include Asp262, Glu275, and Asn277.

This sequence belongs to the D-alanine--D-alanine ligase family. Requires Mg(2+) as cofactor. Mn(2+) serves as cofactor.

The protein localises to the cytoplasm. The enzyme catalyses 2 D-alanine + ATP = D-alanyl-D-alanine + ADP + phosphate + H(+). It functions in the pathway cell wall biogenesis; peptidoglycan biosynthesis. In terms of biological role, cell wall formation. This Burkholderia thailandensis (strain ATCC 700388 / DSM 13276 / CCUG 48851 / CIP 106301 / E264) protein is D-alanine--D-alanine ligase.